The chain runs to 374 residues: Beta sliding clamp (374 aa).

Belongs to the beta sliding clamp family. As to quaternary structure, forms a ring-shaped head-to-tail homodimer around DNA which binds and tethers DNA polymerases and other proteins to the DNA. The DNA replisome complex has a single clamp-loading complex (3 tau and 1 each of delta, delta', psi and chi subunits) which binds 3 Pol III cores (1 core on the leading strand and 2 on the lagging strand) each with a beta sliding clamp dimer. Additional proteins in the replisome are other copies of gamma, psi and chi, Ssb, DNA helicase and RNA primase.

Its subcellular location is the cytoplasm. Functionally, confers DNA tethering and processivity to DNA polymerases and other proteins. Acts as a clamp, forming a ring around DNA (a reaction catalyzed by the clamp-loading complex) which diffuses in an ATP-independent manner freely and bidirectionally along dsDNA. Initially characterized for its ability to contact the catalytic subunit of DNA polymerase III (Pol III), a complex, multichain enzyme responsible for most of the replicative synthesis in bacteria; Pol III exhibits 3'-5' exonuclease proofreading activity. The beta chain is required for initiation of replication as well as for processivity of DNA replication. In Helicobacter pylori (strain ATCC 700392 / 26695) (Campylobacter pylori), this protein is Beta sliding clamp (dnaN).